A 437-amino-acid polypeptide reads, in one-letter code: Minor fimbrial subunit HifE (437 aa).

The first 30 residues, Met-1–Ala-30, serve as a signal peptide directing secretion.

This sequence belongs to the fimbrial protein family.

The protein localises to the fimbrium. Its function is as follows. May be a minor structural protein required for pilus biogenesis. May be the adhesive component in the pili. The chain is Minor fimbrial subunit HifE (hifE) from Haemophilus influenzae.